The primary structure comprises 1472 residues: Type IV pilus biogenesis factor PilY1 homolog PD_1611 (1472 aa).

Asp-1170, Asp-1172, Asp-1174, Leu-1176, and Asp-1178 together coordinate Ca(2+). Positions Arg-1383–Val-1397 are enriched in polar residues. Residues Arg-1383–Ala-1403 form a disordered region.

Belongs to the PilY1 family.

The protein localises to the fimbrium. Its function is as follows. One of the three PilY1 homologs of X.fastidiosa, which are involved in bacterial twitching motility as component of the filamentous type IV pili (T4P). The twitching motility of this protein is enhanced by calcium, which may provide the bacterium an adaptive advantage in environments with high calcium concentrations. The polypeptide is Type IV pilus biogenesis factor PilY1 homolog PD_1611 (Xylella fastidiosa (strain Temecula1 / ATCC 700964)).